The chain runs to 857 residues: Protein dalmatian (857 aa).

Disordered regions lie at residues 1–50 and 146–194; these read MVRT…KLSI and VQKS…FFHR. Polar residues-rich tracts occupy residues 146–156 and 165–176; these read VQKSTQPQNIK and SPCQQRIRSKSP. Residues S173, S175, S184, and S222 each carry the phosphoserine modification. Basic residues predominate over residues 251 to 271; it reads GKPRAKRTAKKVRPVGNRRKV. The tract at residues 251–281 is disordered; it reads GKPRAKRTAKKVRPVGNRRKVSTKDNEPEPV. S405 carries the phosphoserine modification. 2 disordered regions span residues 470-514 and 737-830; these read SICP…NAEN and PPRP…RDIE. Positions 771-781 are enriched in basic and acidic residues; it reads KQPRRTYVKER. Acidic residues predominate over residues 797 to 806; that stretch reads SESEDEDEQD. Basic and acidic residues predominate over residues 807–816; it reads SHDKSLDSPE. A compositionally biased stretch (basic residues) spans 817 to 826; the sequence is KKRHHVKRPR.

It is found in the nucleus. It localises to the chromosome. In terms of biological role, regulator of sister chromatid cohesion in mitosis. Probably involved in development of the central nervous system. In Drosophila melanogaster (Fruit fly), this protein is Protein dalmatian (dmt).